A 74-amino-acid polypeptide reads, in one-letter code: MDIVSLKFIGIGFMAIGMYGAALGVSNIFSSLLSAIARNPSAAENLQRMALIGAGLAEAMGLFAFVIAMLLIFS.

The next 2 helical transmembrane spans lie at 8 to 28 (FIGI…VSNI) and 52 to 72 (IGAG…MLLI).

This sequence belongs to the ATPase C chain family. F-type ATPases have 2 components, F(1) - the catalytic core - and F(0) - the membrane proton channel. F(1) has five subunits: alpha(3), beta(3), gamma(1), delta(1), epsilon(1). F(0) has three main subunits: a(1), b(2) and c(10-14). The alpha and beta chains form an alternating ring which encloses part of the gamma chain. F(1) is attached to F(0) by a central stalk formed by the gamma and epsilon chains, while a peripheral stalk is formed by the delta and b chains.

The protein resides in the cell inner membrane. Functionally, f(1)F(0) ATP synthase produces ATP from ADP in the presence of a proton or sodium gradient. F-type ATPases consist of two structural domains, F(1) containing the extramembraneous catalytic core and F(0) containing the membrane proton channel, linked together by a central stalk and a peripheral stalk. During catalysis, ATP synthesis in the catalytic domain of F(1) is coupled via a rotary mechanism of the central stalk subunits to proton translocation. Key component of the F(0) channel; it plays a direct role in translocation across the membrane. A homomeric c-ring of between 10-14 subunits forms the central stalk rotor element with the F(1) delta and epsilon subunits. This Rickettsia typhi (strain ATCC VR-144 / Wilmington) protein is ATP synthase subunit c.